We begin with the raw amino-acid sequence, 719 residues long: Polyribonucleotide nucleotidyltransferase (719 aa).

Positions 491 and 497 each coordinate Mg(2+). Residues 558–617 (PRMLTIKINPEKIRDVIGKGGATIRALTEETGTQIDISDDGTIVIASVDETQAKEAQRRI) enclose the KH domain. The S1 motif domain occupies 627 to 695 (GQIYDGSVLR…DKGRLRLSIK (69 aa)).

It belongs to the polyribonucleotide nucleotidyltransferase family. The cofactor is Mg(2+).

It is found in the cytoplasm. The catalysed reaction is RNA(n+1) + phosphate = RNA(n) + a ribonucleoside 5'-diphosphate. Its function is as follows. Involved in mRNA degradation. Catalyzes the phosphorolysis of single-stranded polyribonucleotides processively in the 3'- to 5'-direction. The chain is Polyribonucleotide nucleotidyltransferase from Bordetella parapertussis (strain 12822 / ATCC BAA-587 / NCTC 13253).